We begin with the raw amino-acid sequence, 62 residues long: Prokaryotic ubiquitin-like protein Pup (62 aa).

The tract at residues 1 to 36 is disordered; the sequence is MEKSSQIHGSKPGDDNADEPENAAGQSQIRKQGADD. Positions 18–56 are ARC ATPase binding; sequence DEPENAAGQSQIRKQGADDLLDEIDGLLESNAEEFVRSY. Q62 is modified (deamidated glutamine). Q62 participates in a covalent cross-link: Isoglutamyl lysine isopeptide (Gln-Lys) (interchain with K-? in acceptor proteins).

Belongs to the prokaryotic ubiquitin-like protein family. In terms of assembly, strongly interacts with the proteasome-associated ATPase ARC through a hydrophobic interface; the interacting region of Pup lies in its C-terminal half. There is one Pup binding site per ARC hexamer ring. Is modified by deamidation of its C-terminal glutamine to glutamate by the deamidase Dop, a prerequisite to the subsequent pupylation process.

It participates in protein degradation; proteasomal Pup-dependent pathway. In terms of biological role, protein modifier that is covalently attached to lysine residues of substrate proteins, thereby targeting them for proteasomal degradation. The tagging system is termed pupylation. The polypeptide is Prokaryotic ubiquitin-like protein Pup (Corynebacterium kroppenstedtii (strain DSM 44385 / JCM 11950 / CIP 105744 / CCUG 35717)).